Here is a 111-residue protein sequence, read N- to C-terminus: Probable 4-amino-4-deoxy-L-arabinose-phosphoundecaprenol flippase subunit ArnE (111 aa).

A run of 3 helical transmembrane segments spans residues 38–58 (LWLGLALICMGAAMVLWLLVL), 61–81 (LPVGIAYPMLSLNFVWVTLAA), and 91–111 (PRHWLGVALIISGIIILGSAA). The EamA domain maps to 40 to 109 (LGLALICMGA…IISGIIILGS (70 aa)).

It belongs to the ArnE family. In terms of assembly, heterodimer of ArnE and ArnF.

The protein localises to the cell inner membrane. Its pathway is bacterial outer membrane biogenesis; lipopolysaccharide biosynthesis. Functionally, translocates 4-amino-4-deoxy-L-arabinose-phosphoundecaprenol (alpha-L-Ara4N-phosphoundecaprenol) from the cytoplasmic to the periplasmic side of the inner membrane. The polypeptide is Probable 4-amino-4-deoxy-L-arabinose-phosphoundecaprenol flippase subunit ArnE (Salmonella newport (strain SL254)).